The primary structure comprises 149 residues: Endoribonuclease YbeY (149 aa).

Zn(2+)-binding residues include His115, His119, and His125.

This sequence belongs to the endoribonuclease YbeY family. Zn(2+) serves as cofactor.

Its subcellular location is the cytoplasm. In terms of biological role, single strand-specific metallo-endoribonuclease involved in late-stage 70S ribosome quality control and in maturation of the 3' terminus of the 16S rRNA. This is Endoribonuclease YbeY from Mycoplasmopsis pulmonis (strain UAB CTIP) (Mycoplasma pulmonis).